The following is a 421-amino-acid chain: Acetate kinase (421 aa).

Residue Asn7 coordinates Mg(2+). Lys14 contributes to the ATP binding site. Residue Arg91 participates in substrate binding. Catalysis depends on Asp148, which acts as the Proton donor/acceptor. ATP contacts are provided by residues 208–212 and 283–285; these read HIGNG and DRR. Position 387 (Glu387) interacts with Mg(2+).

It belongs to the acetokinase family. As to quaternary structure, homodimer. Mg(2+) serves as cofactor. Mn(2+) is required as a cofactor.

The protein localises to the cytoplasm. It catalyses the reaction acetate + ATP = acetyl phosphate + ADP. The protein operates within metabolic intermediate biosynthesis; acetyl-CoA biosynthesis; acetyl-CoA from acetate: step 1/2. In terms of biological role, catalyzes the formation of acetyl phosphate from acetate and ATP. Can also catalyze the reverse reaction. The polypeptide is Acetate kinase (Geobacter metallireducens (strain ATCC 53774 / DSM 7210 / GS-15)).